The primary structure comprises 497 residues: Probable sensor kinase SilS (497 aa).

Residues 1–15 (MHSKPSRLPFSLALR) are Cytoplasmic-facing. A helical transmembrane segment spans residues 16 to 36 (LTFFISLSTILAFIAFTWFML). Topologically, residues 37-186 (HSVEKHFAEQ…HLHYLDALKK (150 aa)) are periplasmic. Residues 187–207 (NLIAIAVVISLLIVLIIRIAV) form a helical membrane-spanning segment. In terms of domain architecture, HAMP spans 208–261 (RQGHLPLRNVSNAIKNITSENLDARLEPTRVPIELEQLVISFNHMIGKIEDVFT). At 208–497 (RQGHLPLRNV…KMIPDTQCWE (290 aa)) the chain is on the cytoplasmic side. Positions 269–487 (DIAHEIRTPI…RFILSVPRLE (219 aa)) constitute a Histidine kinase domain. Position 272 is a phosphohistidine; by autocatalysis (His272).

Its subcellular location is the cell inner membrane. The catalysed reaction is ATP + protein L-histidine = ADP + protein N-phospho-L-histidine.. In terms of biological role, component of the sil cation-efflux system that confers resistance to silver. Probable member of a two-component regulatory system SilS/SilR. May activate SilR by phosphorylation. This is Probable sensor kinase SilS (silS) from Salmonella typhimurium.